Reading from the N-terminus, the 95-residue chain is uncharacterized protein (95 aa).

Basic and acidic residues-rich tracts occupy residues 1-28 (MRRA…KERC) and 41-53 (DERV…KGRP). The tract at residues 1–73 (MRRAEVKRSA…RTSRAGSSWQ (73 aa)) is disordered.

This is an uncharacterized protein from Homo sapiens (Human).